We begin with the raw amino-acid sequence, 317 residues long: Melanocyte-stimulating hormone receptor (317 aa).

Residues methionine 1–glutamate 37 lie on the Extracellular side of the membrane. Asparagine 29 carries an N-linked (GlcNAc...) asparagine glycan. The chain crosses the membrane as a helical span at residues valine 38–isoleucine 63. At alanine 64 to proline 72 the chain is on the cytoplasmic side. Residues methionine 73–leucine 93 traverse the membrane as a helical segment. Over glutamate 94–asparagine 118 the chain is Extracellular. A helical membrane pass occupies residues threonine 119 to valine 140. Topologically, residues aspartate 141 to arginine 163 are cytoplasmic. The helical transmembrane segment at alanine 164 to cysteine 183 threads the bilayer. Over aspartate 184 to cysteine 191 the chain is Extracellular. Residues leucine 192–leucine 211 traverse the membrane as a helical segment. The Cytoplasmic segment spans residues alanine 212 to alanine 240. Residues alanine 241–leucine 266 form a helical membrane-spanning segment. Residues cysteine 267–asparagine 279 lie on the Extracellular side of the membrane. Residues phenylalanine 280–phenylalanine 300 form a helical membrane-spanning segment. The Cytoplasmic portion of the chain corresponds to arginine 301–tryptophan 317. Cysteine 315 carries S-palmitoyl cysteine lipidation.

The protein belongs to the G-protein coupled receptor 1 family. Interacts with MGRN1, but does not undergo MGRN1-mediated ubiquitination; this interaction competes with GNAS-binding and thus inhibits agonist-induced cAMP production. Interacts with OPN3; the interaction results in a decrease in MC1R-mediated cAMP signaling and ultimately a decrease in melanin production in melanocytes.

The protein localises to the cell membrane. Receptor for MSH (alpha, beta and gamma) and ACTH. The activity of this receptor is mediated by G proteins which activate adenylate cyclase. Mediates melanogenesis, the production of eumelanin (black/brown) and phaeomelanin (red/yellow), via regulation of cAMP signaling in melanocytes. The chain is Melanocyte-stimulating hormone receptor (MC1R) from Alouatta caraya (Black howler monkey).